Consider the following 98-residue polypeptide: Co-chaperonin GroES (98 aa).

The protein belongs to the GroES chaperonin family. Heptamer of 7 subunits arranged in a ring. Interacts with the chaperonin GroEL.

Its subcellular location is the cytoplasm. Together with the chaperonin GroEL, plays an essential role in assisting protein folding. The GroEL-GroES system forms a nano-cage that allows encapsulation of the non-native substrate proteins and provides a physical environment optimized to promote and accelerate protein folding. GroES binds to the apical surface of the GroEL ring, thereby capping the opening of the GroEL channel. This is Co-chaperonin GroES from Leifsonia xyli subsp. xyli (strain CTCB07).